A 246-amino-acid polypeptide reads, in one-letter code: tRNA (guanine-N(7)-)-methyltransferase (246 aa).

The S-adenosyl-L-methionine site is built by glutamate 76, glutamate 101, aspartate 128, and aspartate 151. Residue aspartate 151 is part of the active site. Residue lysine 155 coordinates substrate. Residues 157-162 (RHNKRR) are interaction with RNA. Substrate contacts are provided by residues aspartate 187 and 222-225 (TKFE).

This sequence belongs to the class I-like SAM-binding methyltransferase superfamily. TrmB family.

It carries out the reaction guanosine(46) in tRNA + S-adenosyl-L-methionine = N(7)-methylguanosine(46) in tRNA + S-adenosyl-L-homocysteine. The protein operates within tRNA modification; N(7)-methylguanine-tRNA biosynthesis. Catalyzes the formation of N(7)-methylguanine at position 46 (m7G46) in tRNA. In Dechloromonas aromatica (strain RCB), this protein is tRNA (guanine-N(7)-)-methyltransferase.